The chain runs to 297 residues: Carbamate kinase (297 aa).

It belongs to the carbamate kinase family.

It localises to the cytoplasm. It carries out the reaction hydrogencarbonate + NH4(+) + ATP = carbamoyl phosphate + ADP + H2O + H(+). The catalysed reaction is carbamate + ATP = carbamoyl phosphate + ADP. It catalyses the reaction hydrogencarbonate + NH4(+) = carbamate + H2O + H(+). The protein operates within nitrogen metabolism; (S)-allantoin degradation. Kinase involved in the anaerobic nitrogen utilization via the assimilation of allantoin. Catalyzes the transfer of a phosphate group from carbamoyl phosphate to ADP to produce ATP and leave carbamate, which spontaneously hydrolyzes to ammonia and hydrogencarbonate. In Escherichia coli (strain K12), this protein is Carbamate kinase.